A 142-amino-acid polypeptide reads, in one-letter code: Large ribosomal subunit protein uL13 (142 aa).

The protein belongs to the universal ribosomal protein uL13 family. As to quaternary structure, part of the 50S ribosomal subunit.

Its function is as follows. This protein is one of the early assembly proteins of the 50S ribosomal subunit, although it is not seen to bind rRNA by itself. It is important during the early stages of 50S assembly. This chain is Large ribosomal subunit protein uL13, found in Vibrio campbellii (strain ATCC BAA-1116).